Here is a 412-residue protein sequence, read N- to C-terminus: MTDIRELRKVVDRFRAQERKAAASINLVPSENKLSPLAQMPLSTDYYNRYFFNDELDPGFWQFRGGQEVAKIQTELARGHLSRLARAPYVNERPISGLSAMMMAMAGLGGPPGGTVVSIDAASGGHYATADMARRLGFESATVPVVRGRVDEQWFGQVLREHVPELVYLDLQNSRHELEVSRVAELIEAHSPHTILHVDCSHTMGLILGGALSNPLDAGAHTMGGSTHKSFPGPHKGVLFTRSPELHQRLKHAQFTMLSSHHFAETLALGLAAAEFRHFGHAYAEQVVANARLLGKLLAADGFDVTADENGHATSTHQLWVRIGDAEQTDRFSKYLYDHGIRVNVQVDLPGLPGPVLRLGVNELTFLGGHEAAVHALAEEFSHARDGVRRDGEGSQRVREQYGPPFYFVEFS.

Position 229 is an N6-(pyridoxal phosphate)lysine (Lys229).

Belongs to the SHMT family. Pyridoxal 5'-phosphate serves as cofactor.

The catalysed reaction is uridine-5'-aldehyde + L-threonine = (5'S,6'S)-C-glycyluridine + acetaldehyde. The protein operates within antibiotic biosynthesis. Its function is as follows. Transaldolase involved in the biosynthesis of the capuramycin-type nucleoside antibiotic A-503083. Catalyzes the condensation of L-threonine and uridine-5'-aldehyde to form 5'-C-glycyluridine (GlyU). Forms (5'S,6'S)-GlyU. In Streptomyces sp, this protein is L-threonine:uridine-5'-aldehyde transaldolase.